Consider the following 564-residue polypeptide: 2-succinyl-5-enolpyruvyl-6-hydroxy-3-cyclohexene-1-carboxylate synthase (564 aa).

The protein belongs to the TPP enzyme family. MenD subfamily. As to quaternary structure, homodimer. The cofactor is Mg(2+). Requires Mn(2+) as cofactor. Thiamine diphosphate serves as cofactor.

It catalyses the reaction isochorismate + 2-oxoglutarate + H(+) = 5-enolpyruvoyl-6-hydroxy-2-succinyl-cyclohex-3-ene-1-carboxylate + CO2. It participates in quinol/quinone metabolism; 1,4-dihydroxy-2-naphthoate biosynthesis; 1,4-dihydroxy-2-naphthoate from chorismate: step 2/7. It functions in the pathway quinol/quinone metabolism; menaquinone biosynthesis. In terms of biological role, catalyzes the thiamine diphosphate-dependent decarboxylation of 2-oxoglutarate and the subsequent addition of the resulting succinic semialdehyde-thiamine pyrophosphate anion to isochorismate to yield 2-succinyl-5-enolpyruvyl-6-hydroxy-3-cyclohexene-1-carboxylate (SEPHCHC). The chain is 2-succinyl-5-enolpyruvyl-6-hydroxy-3-cyclohexene-1-carboxylate synthase from Vibrio vulnificus (strain CMCP6).